Here is a 294-residue protein sequence, read N- to C-terminus: Transmembrane protein 178B (294 aa).

The signal sequence occupies residues 1–23; it reads MAAGRLLLYTGLSLALCALGMLA. Asn148 and Asn152 each carry an N-linked (GlcNAc...) asparagine glycan. The next 3 helical transmembrane spans lie at 172 to 192, 206 to 226, and 252 to 272; these read AGFM…GVLG, LLFL…VAGI, and MFCA…CTLA.

It belongs to the TMEM178 family.

It localises to the membrane. This Homo sapiens (Human) protein is Transmembrane protein 178B (TMEM178B).